We begin with the raw amino-acid sequence, 157 residues long: Transcription inhibitor protein Gfh1 (157 aa).

The stretch at 1-74 (MAREVKLTKA…LEDVLSRAVI (74 aa)) forms a coiled coil.

It belongs to the GreA/GreB family. Interacts with RNAP.

Its function is as follows. Inhibits all catalytic activities of RNA polymerase (RNAP) by partially occluding its substrate-binding site and preventing NTP binding. The protein is Transcription inhibitor protein Gfh1 (gfh1) of Thermus aquaticus.